The chain runs to 105 residues: Venom metalloprotease inhibitor (105 aa).

The signal sequence occupies residues 1–21 (MFRFVCVLFIALVVFCTTTSA). 5 cysteine pairs are disulfide-bonded: C26/C61, C35/C57, C39/C50, C43/C83, and C63/C77. The 58-residue stretch at 26–83 (CNRPNEEYRCGSACQTTCATLGQRCPIMNIRCNDACYCKEGYARYGDDTGMCVSISQC) folds into the TIL domain.

This sequence belongs to the serine protease inhibitor-like (TIL domain-containing) family. In terms of tissue distribution, expressed by the venom gland.

It is found in the secreted. In terms of biological role, inhibits metalloprotease (human MMP3), trypsin, chymotrypsin, plasmin and microbial serine protease (proteinase K). Exhibits antifibrinolytic activity by binding plasmin and inhibiting it. Does not inhibit elastase, thrombin or microbial serine protease (subtilisin A). This Bombus ignitus (Bumblebee) protein is Venom metalloprotease inhibitor.